We begin with the raw amino-acid sequence, 277 residues long: 3-methyl-2-oxobutanoate hydroxymethyltransferase (277 aa).

Mg(2+) is bound by residues D43 and D82. 3-methyl-2-oxobutanoate-binding positions include 43–44 (DS), D82, and K112. E114 contacts Mg(2+). E181 serves as the catalytic Proton acceptor.

It belongs to the PanB family. In terms of assembly, homodecamer; pentamer of dimers. Mg(2+) serves as cofactor.

Its subcellular location is the cytoplasm. It carries out the reaction 3-methyl-2-oxobutanoate + (6R)-5,10-methylene-5,6,7,8-tetrahydrofolate + H2O = 2-dehydropantoate + (6S)-5,6,7,8-tetrahydrofolate. Its pathway is cofactor biosynthesis; (R)-pantothenate biosynthesis; (R)-pantoate from 3-methyl-2-oxobutanoate: step 1/2. In terms of biological role, catalyzes the reversible reaction in which hydroxymethyl group from 5,10-methylenetetrahydrofolate is transferred onto alpha-ketoisovalerate to form ketopantoate. The polypeptide is 3-methyl-2-oxobutanoate hydroxymethyltransferase (Exiguobacterium sp. (strain ATCC BAA-1283 / AT1b)).